The sequence spans 1020 residues: X-linked retinitis pigmentosa GTPase regulator (1020 aa).

RCC1 repeat units follow at residues 54-105 (NKLY…STEG), 106-158 (GNVY…LTED), 159-208 (GRLF…VTTD), 209-261 (GELY…LTEN), 262-313 (AVYT…ITDI), and 314-367 (GLMY…FAAP). 2 positions are modified to phosphoserine: S418 and S518. Disordered stretches follow at residues 609-776 (HENN…IISK), 790-906 (EIPE…KEKA), and 989-1020 (DNKDADQNHMSQNHQNIPPTNTERRSKSCTIL). Composition is skewed to basic and acidic residues over residues 618–636 (LDAKEIEKESDGGHSQKES), 644–665 (EKETKLAEIAGMKDLREREKST), 685–698 (EENKDFVKKRESCK), 704–715 (DSERESVEKPDS), 760–771 (KLIEQGNEKETK), 790–802 (EIPEEKEGAEDSK), 816–853 (ENVKVHGGRKEKTEILSDDLTDKAEDHEFSKTEELKLE), and 883–906 (SKTEGAERTNDDSSAETIEKKEKA). Polar residues predominate over residues 996-1009 (NHMSQNHQNIPPTN). A Cysteine methyl ester modification is found at C1017. Residue C1017 is the site of S-geranylgeranyl cysteine attachment. A propeptide spans 1018–1020 (TIL) (removed in mature form).

As to quaternary structure, interacts with SPATA7. Interacts with CEP290. Interacts with WHRN. Interacts with PDE6D. Interacts with RPGRIP1. Interacts with RPGRIP1L. PDE6D, RPGRIP1 and RPGRIP1L may compete for the same binding sites. Interacts with RAB37 and RAB8A (in GDP-bound forms); functions as GEF for RAB37 and RAB8A. Isoform 6 interacts with NPM1 (via C-terminus). Isoform 6 interacts with SMC1A and SMC3. Post-translationally, prenylated. Heart, brain, placenta, lung, liver, muscle, kidney, retina, pancreas and fetal retinal pigment epithelium. Isoform 3 is found only in the retina. Colocalizes with RPGRIP1 in the outer segment of rod photoreceptors and cone outer segments.

Its subcellular location is the cytoplasm. The protein localises to the cytoskeleton. The protein resides in the flagellum axoneme. It is found in the golgi apparatus. It localises to the cell projection. Its subcellular location is the cilium. The protein localises to the microtubule organizing center. The protein resides in the centrosome. It is found in the cilium basal body. It localises to the cilium axoneme. In terms of biological role, acts as a guanine-nucleotide releasing factor (GEF) for RAB8A and RAB37 by promoting the conversion of inactive RAB-GDP to the active form RAB-GTP. GEF activity towards RAB8A may facilitate ciliary trafficking by modulating ciliary intracellular localization of RAB8A. GEF activity towards RAB37 maintains autophagic homeostasis and retinal function. Involved in photoreceptor integrity. May control cilia formation by regulating actin stress filaments and cell contractility. May be involved in microtubule organization and regulation of transport in primary cilia. May play a critical role in spermatogenesis and in intraflagellar transport processes. The chain is X-linked retinitis pigmentosa GTPase regulator from Homo sapiens (Human).